The primary structure comprises 157 residues: ABA-responsive protein ABR17 (157 aa).

This sequence belongs to the BetVI family.

The protein is ABA-responsive protein ABR17 of Pisum sativum (Garden pea).